The chain runs to 62 residues: Large ribosomal subunit protein uL30 (62 aa).

This sequence belongs to the universal ribosomal protein uL30 family. As to quaternary structure, part of the 50S ribosomal subunit.

This chain is Large ribosomal subunit protein uL30, found in Thioalkalivibrio sulfidiphilus (strain HL-EbGR7).